The following is a 336-amino-acid chain: MTYAIHESLTLLSQKQDLPEELTFTVVQDLLSGELTPAQIGGLLLGLSLKGETPEEIAAFAQALRGAGLKIKAPAGTLDTCGTGGDRSGTFNISTTAAFVIAGAGVPVAKHGNRFASGRCGSADVLEQLGISLKATPESSERHLQHIGMTFLFAQVYHPAMAKVAAERRELGIRTIFNLLGPLLNPAGAPYQLLGVSSPSLLPKMAKALQILGSKRAVVAVGEDGLDEVTLTGATQAILIDGGEIQPFIIRPEEYGLNLCSLQDLQGGTPAENGQITLRILQGKKGPQRDIVLLNAGTALYAANKAAGIREGIALAAESLDSGKALSILEKLKASA.

5-phospho-alpha-D-ribose 1-diphosphate-binding positions include glycine 82, 85 to 86 (GD), threonine 90, 92 to 95 (NIST), 110 to 118 (KHGNRFASG), and serine 122. Residue glycine 82 coordinates anthranilate. Serine 94 contacts Mg(2+). An anthranilate-binding site is contributed by asparagine 113. Arginine 168 is an anthranilate binding site. Mg(2+) contacts are provided by aspartate 227 and glutamate 228.

This sequence belongs to the anthranilate phosphoribosyltransferase family. As to quaternary structure, homodimer. Mg(2+) is required as a cofactor.

The catalysed reaction is N-(5-phospho-beta-D-ribosyl)anthranilate + diphosphate = 5-phospho-alpha-D-ribose 1-diphosphate + anthranilate. It participates in amino-acid biosynthesis; L-tryptophan biosynthesis; L-tryptophan from chorismate: step 2/5. Functionally, catalyzes the transfer of the phosphoribosyl group of 5-phosphorylribose-1-pyrophosphate (PRPP) to anthranilate to yield N-(5'-phosphoribosyl)-anthranilate (PRA). This chain is Anthranilate phosphoribosyltransferase, found in Desulfitobacterium hafniense (strain Y51).